We begin with the raw amino-acid sequence, 350 residues long: Protein pelota homolog (350 aa).

It belongs to the eukaryotic release factor 1 family. Pelota subfamily. As to quaternary structure, monomer. A divalent metal cation is required as a cofactor.

It is found in the cytoplasm. In terms of biological role, may function in recognizing stalled ribosomes, interact with stem-loop structures in stalled mRNA molecules, and effect endonucleolytic cleavage of the mRNA. May play a role in the release non-functional ribosomes and degradation of damaged mRNAs. Has endoribonuclease activity. In Methanosarcina barkeri (strain Fusaro / DSM 804), this protein is Protein pelota homolog.